A 487-amino-acid chain; its full sequence is Polyamine oxidase 4 (487 aa).

Residues E53, R61, V242, and E429 each contribute to the FAD site. The Microbody targeting signal signature appears at 485 to 487 (CRT).

This sequence belongs to the flavin monoamine oxidase family. FAD is required as a cofactor. Widely expressed.

The protein resides in the peroxisome. It catalyses the reaction spermine + O2 + H2O = 3-aminopropanal + spermidine + H2O2. The catalysed reaction is norspermine + O2 + H2O = norspermidine + 3-aminopropanal + H2O2. It carries out the reaction thermospermine + O2 + H2O = 3-aminopropanal + spermidine + H2O2. It participates in amine and polyamine degradation; spermine degradation. In terms of biological role, flavoenzyme involved in polyamine back-conversion. Catalyzes the oxidation of the secondary amino group of polyamines, such as spermine. Substrate preference is spermine &gt; thermospermine &gt; norspermine. No activity detected when putrescine, spermidine or N(1)-acetylspermidine are used as substrates. Plays an important role in the regulation of polyamine intracellular concentration. The chain is Polyamine oxidase 4 from Oryza sativa subsp. japonica (Rice).